The chain runs to 168 residues: Lipoprotein signal peptidase (168 aa).

4 consecutive transmembrane segments (helical) span residues 15–35, 47–67, 75–95, and 107–127; these read WLWLALVVFLADIGIKFIVME, VLPFFNLLYVHNYGAAFSFLS, WLFTGIAFVVTGLLTYWMSKL, and AMIIGGAIGNVFDRMVHGFVV. Active-site residues include Asp-128 and Asp-146. A helical membrane pass occupies residues 141 to 161; that stretch reads AFNLADTAICLGAAMIILDGF.

The protein belongs to the peptidase A8 family.

It localises to the cell inner membrane. It catalyses the reaction Release of signal peptides from bacterial membrane prolipoproteins. Hydrolyzes -Xaa-Yaa-Zaa-|-(S,diacylglyceryl)Cys-, in which Xaa is hydrophobic (preferably Leu), and Yaa (Ala or Ser) and Zaa (Gly or Ala) have small, neutral side chains.. Its pathway is protein modification; lipoprotein biosynthesis (signal peptide cleavage). In terms of biological role, this protein specifically catalyzes the removal of signal peptides from prolipoproteins. The sequence is that of Lipoprotein signal peptidase from Vibrio vulnificus (strain CMCP6).